The following is a 371-amino-acid chain: Protein SPATA31F3 (371 aa).

The chain crosses the membrane as a helical span at residues 7 to 29 (ILWDVGSSVYTYGSLFIIALIIW). Residues 62–86 (LRVKKRTTKEETEKLQKLLSNMKRQ) are a coiled coil. 2 stretches are compositionally biased toward polar residues: residues 189–203 (LSKV…LSSQ) and 244–266 (PQQQ…SSSS). 3 disordered regions span residues 189–222 (LSKV…STDQ), 240–299 (YHPA…EAEM), and 326–371 (YKSE…KRNI). A phosphoserine mark is found at serine 197 and serine 198. Residues 277 to 287 (QKKRKKTKKLV) show a composition bias toward basic residues. The segment covering 330-362 (TGAKPKTGEPKKSSAKVRAEEPNLEKHAKDLKA) has biased composition (basic and acidic residues).

It belongs to the SPATA31 family.

It localises to the membrane. The sequence is that of Protein SPATA31F3 (Spata31f3) from Mus musculus (Mouse).